The sequence spans 724 residues: uncharacterized protein (724 aa).

Disordered regions lie at residues 1–23, 166–477, 496–517, and 532–691; these read MEDR…IPDN, PDGY…PPRD, EAHD…AHGP, and DHPI…PALS. Composition is skewed to polar residues over residues 227–245 and 270–296; these read VSQS…TVNQ and STTL…TSDA. A compositionally biased stretch (basic and acidic residues) spans 304-322; it reads TRDHDRYGNGRGPDTDRLE. A compositionally biased stretch (polar residues) spans 403–413; that stretch reads PSSSHSETPNM. Basic and acidic residues-rich tracts occupy residues 550-560 and 637-657; these read RNHEFTEDKRL and LRHD…DLAA. The span at 682 to 691 shows a compositional bias: low complexity; sequence RLAAASPALS.

This is an uncharacterized protein from Neurospora crassa (strain ATCC 24698 / 74-OR23-1A / CBS 708.71 / DSM 1257 / FGSC 987).